A 417-amino-acid chain; its full sequence is Peptidyl-Asp metalloendopeptidase (417 aa).

An N-terminal signal peptide occupies residues 1–23 (MKSKSMCTTVGLIAMCLAGSAAA). Position 331 (histidine 331) interacts with Zn(2+). Glutamate 332 is a catalytic residue. The Zn(2+) site is built by histidine 335 and histidine 341.

It belongs to the peptidase M72 family. The cofactor is Zn(2+).

The enzyme catalyses Cleavage of Xaa-|-Asp, Xaa-|-Glu and Xaa-|-cysteic acid bonds.. Metalloprotease, specifically cleaves on the N-terminal side of aspartyl, glutamyl and cysteic acid residues. This chain is Peptidyl-Asp metalloendopeptidase, found in Xanthomonas campestris pv. campestris (strain ATCC 33913 / DSM 3586 / NCPPB 528 / LMG 568 / P 25).